Here is a 389-residue protein sequence, read N- to C-terminus: Succinate--CoA ligase [ADP-forming] subunit beta (389 aa).

Residues lysine 46, 53–55 (GRG), glutamate 99, cysteine 102, and glutamate 107 contribute to the ATP site. Mg(2+) is bound by residues asparagine 199 and aspartate 213. Residues asparagine 264 and 321-323 (GIV) each bind substrate.

Belongs to the succinate/malate CoA ligase beta subunit family. In terms of assembly, heterotetramer of two alpha and two beta subunits. It depends on Mg(2+) as a cofactor.

The enzyme catalyses succinate + ATP + CoA = succinyl-CoA + ADP + phosphate. It catalyses the reaction GTP + succinate + CoA = succinyl-CoA + GDP + phosphate. It functions in the pathway carbohydrate metabolism; tricarboxylic acid cycle; succinate from succinyl-CoA (ligase route): step 1/1. Its function is as follows. Succinyl-CoA synthetase functions in the citric acid cycle (TCA), coupling the hydrolysis of succinyl-CoA to the synthesis of either ATP or GTP and thus represents the only step of substrate-level phosphorylation in the TCA. The beta subunit provides nucleotide specificity of the enzyme and binds the substrate succinate, while the binding sites for coenzyme A and phosphate are found in the alpha subunit. The sequence is that of Succinate--CoA ligase [ADP-forming] subunit beta from Haemophilus influenzae (strain PittEE).